Reading from the N-terminus, the 321-residue chain is CRISPR-associated aCascade subunit Cas7/Csa2 2 (321 aa).

Belongs to the CRISPR-associated protein Cas7/Cst2/DevR family. Subtype I-a/Apern subfamily. As to quaternary structure, part of the aCascade ribonucleoprotein complex, minimally composed of Csa2 and Cas5a, which binds crRNA. Other possible components of aCascade in strain P1 are Cas6b (SSO1437) and Csa5 (SSO1443), while SSO1399, Cas5b (SSO1400) and SSO1401 have sometimes been seen weakly associated. Csa2 is probably the major RNA-binding subunit. The Csa2-Cas5a-crRNA complex also binds target DNA homologous to crRNA, probably forming an R-loop. Purified aCascade forms a filament about 6 nm in width.

CRISPR (clustered regularly interspaced short palindromic repeat) is an adaptive immune system that provides protection against mobile genetic elements (viruses, transposable elements and conjugative plasmids). CRISPR clusters contain spacers, sequences complementary to antecedent mobile elements, and target invading nucleic acids. CRISPR clusters are transcribed and processed into CRISPR RNA (crRNA). The chain is CRISPR-associated aCascade subunit Cas7/Csa2 2 (csa2b) from Saccharolobus solfataricus (strain ATCC 35092 / DSM 1617 / JCM 11322 / P2) (Sulfolobus solfataricus).